An 883-amino-acid chain; its full sequence is Protein SEY1 homolog (883 aa).

Residues 1–795 lie on the Cytoplasmic side of the membrane; sequence MQMDRKTQII…ETGGKMSLKN (795 aa). The GB1/RHD3-type G domain maps to 33–279; the sequence is GFNYNVVAIL…IPSDGFAHYC (247 aa). 43–50 contacts GTP; the sequence is GSQSSGKS. Residues 673-693 adopt a coiled-coil conformation; the sequence is LDEIMDVLKSKLDEISDNLSS. A helical transmembrane segment spans residues 796 to 816; sequence VPLFFWVILLILGWNELLFFI. Topologically, residues 817–819 are lumenal; that stretch reads RFF. Residues 820–840 form a helical membrane-spanning segment; sequence FRLNIILPLFLAAAVILSTLF. Residues 841 to 883 lie on the Cytoplasmic side of the membrane; that stretch reads FNGNMEVLSTINKVVFFLAKSSFGFYRQLQTMGEKVAQVPTAD.

This sequence belongs to the TRAFAC class dynamin-like GTPase superfamily. GB1/RHD3 GTPase family. RHD3 subfamily.

It localises to the endoplasmic reticulum membrane. In terms of biological role, probable GTP-binding protein involved in generating and maintaining the structure of the tubular endoplasmic reticulum network. The sequence is that of Protein SEY1 homolog from Plasmodium knowlesi (strain H).